The following is a 360-amino-acid chain: Mediator of RNA polymerase II transcription subunit 6 (360 aa).

Disordered stretches follow at residues 186 to 238 (PAQP…NDPL) and 316 to 360 (AAAA…PGAA). 2 stretches are compositionally biased toward low complexity: residues 190–205 (SAGA…YTAS) and 316–325 (AAAAAANANA).

It belongs to the Mediator complex subunit 6 family. As to quaternary structure, component of the Mediator complex.

It localises to the nucleus. In terms of biological role, component of the Mediator complex, a coactivator involved in the regulated transcription of nearly all RNA polymerase II-dependent genes. Mediator functions as a bridge to convey information from gene-specific regulatory proteins to the basal RNA polymerase II transcription machinery. Mediator is recruited to promoters by direct interactions with regulatory proteins and serves as a scaffold for the assembly of a functional preinitiation complex with RNA polymerase II and the general transcription factors. This is Mediator of RNA polymerase II transcription subunit 6 (med-6) from Neurospora crassa (strain ATCC 24698 / 74-OR23-1A / CBS 708.71 / DSM 1257 / FGSC 987).